The following is a 568-amino-acid chain: Estrogen receptor beta-1 (568 aa).

Residues serine 12 to tyrosine 169 form a modulating region. NR C4-type zinc fingers lie at residues cysteine 170–cysteine 190 and cysteine 206–cysteine 230. The segment at residues cysteine 170–methionine 235 is a DNA-binding region (nuclear receptor). The NR LBD domain maps to serine 292–histidine 528.

The protein belongs to the nuclear hormone receptor family. NR3 subfamily. Binds DNA as a homodimer. Can form a heterodimer with ER-alpha.

It localises to the nucleus. Its function is as follows. Binds estrogens with an affinity similar to that of ER-alpha, and activates expression of reporter genes containing estrogen response elements (ERE) in an estrogen-dependent manner. In Carassius auratus (Goldfish), this protein is Estrogen receptor beta-1 (esr2a).